We begin with the raw amino-acid sequence, 161 residues long: Non-secretory ribonuclease (161 aa).

The signal sequence occupies residues 1 to 27; the sequence is MVPKLFTSQICLLLLLGLLAVEGSLHV. C-linked (Man) tryptophan glycosylation is present at W34. Residue H42 is the Proton acceptor of the active site. Residue N44 is glycosylated (N-linked (GlcNAc...) asparagine). Disulfide bonds link C50-C110, C64-C123, C82-C138, and C89-C98. Position 60 is a 3'-nitrotyrosine (Y60). Residue 65–69 participates in substrate binding; the sequence is KNQNT. 4 N-linked (GlcNAc...) asparagine glycosylation sites follow: N86, N92, N111, and N119. The active-site Proton donor is H156.

It belongs to the pancreatic ribonuclease family. As to quaternary structure, interacts with and forms a tight 1:1 complex with RNH1. Dimerization of two such complexes may occur.

The protein resides in the lysosome. The protein localises to the cytoplasmic granule. The enzyme catalyses an [RNA] containing cytidine + H2O = an [RNA]-3'-cytidine-3'-phosphate + a 5'-hydroxy-ribonucleotide-3'-[RNA].. It carries out the reaction an [RNA] containing uridine + H2O = an [RNA]-3'-uridine-3'-phosphate + a 5'-hydroxy-ribonucleotide-3'-[RNA].. Functionally, this is a non-secretory ribonuclease. It is a pyrimidine specific nuclease with a slight preference for U. Cytotoxin and helminthotoxin. Possesses a wide variety of biological activities. In Gorilla gorilla gorilla (Western lowland gorilla), this protein is Non-secretory ribonuclease (RNASE2).